We begin with the raw amino-acid sequence, 513 residues long: Maturase K (513 aa).

It belongs to the intron maturase 2 family. MatK subfamily.

The protein localises to the plastid. It localises to the chloroplast. Usually encoded in the trnK tRNA gene intron. Probably assists in splicing its own and other chloroplast group II introns. This chain is Maturase K, found in Saccharum officinarum (Sugarcane).